A 369-amino-acid chain; its full sequence is NADH-quinone oxidoreductase subunit H (369 aa).

8 consecutive transmembrane segments (helical) span residues 20 to 40, 88 to 108, 133 to 153, 179 to 199, 205 to 225, 267 to 287, 293 to 313, and 328 to 348; these read VLLI…AYLV, ICFL…WAVI, IGVL…IIAG, IGLT…GEIV, MPYW…ISSL, ILIN…PLNI, IPGI…FIWI, and LGWK…SGVL.

It belongs to the complex I subunit 1 family. In terms of assembly, NDH-1 is composed of 14 different subunits. Subunits NuoA, H, J, K, L, M, N constitute the membrane sector of the complex.

The protein localises to the cell inner membrane. It carries out the reaction a quinone + NADH + 5 H(+)(in) = a quinol + NAD(+) + 4 H(+)(out). Functionally, NDH-1 shuttles electrons from NADH, via FMN and iron-sulfur (Fe-S) centers, to quinones in the respiratory chain. The immediate electron acceptor for the enzyme in this species is believed to be ubiquinone. Couples the redox reaction to proton translocation (for every two electrons transferred, four hydrogen ions are translocated across the cytoplasmic membrane), and thus conserves the redox energy in a proton gradient. This subunit may bind ubiquinone. The polypeptide is NADH-quinone oxidoreductase subunit H (Ehrlichia canis (strain Jake)).